Here is an 88-residue protein sequence, read N- to C-terminus: Small ribosomal subunit protein bS20 (88 aa).

Residues 1–28 (MANTSSAKKATRKIARRTAVNKSRRTQM) form a disordered region.

In terms of biological role, binds directly to 16S ribosomal RNA. This Rhodopseudomonas palustris (strain ATCC BAA-98 / CGA009) protein is Small ribosomal subunit protein bS20.